We begin with the raw amino-acid sequence, 347 residues long: Quinolinate synthase (347 aa).

Residues H47 and S68 each contribute to the iminosuccinate site. C113 serves as a coordination point for [4Fe-4S] cluster. Iminosuccinate is bound by residues 139 to 141 (YAN) and S156. Position 200 (C200) interacts with [4Fe-4S] cluster. Residues 226 to 228 (HPE) and T243 each bind iminosuccinate. C297 contacts [4Fe-4S] cluster.

Belongs to the quinolinate synthase family. Type 1 subfamily. The cofactor is [4Fe-4S] cluster.

It is found in the cytoplasm. The enzyme catalyses iminosuccinate + dihydroxyacetone phosphate = quinolinate + phosphate + 2 H2O + H(+). Its pathway is cofactor biosynthesis; NAD(+) biosynthesis; quinolinate from iminoaspartate: step 1/1. Functionally, catalyzes the condensation of iminoaspartate with dihydroxyacetone phosphate to form quinolinate. In Escherichia coli O9:H4 (strain HS), this protein is Quinolinate synthase.